Here is a 376-residue protein sequence, read N- to C-terminus: UDP-N-acetylglucosamine--N-acetylmuramyl-(pentapeptide) pyrophosphoryl-undecaprenol N-acetylglucosamine transferase (376 aa).

UDP-N-acetyl-alpha-D-glucosamine-binding positions include 11-13, Asn-117, Arg-160, Ser-208, and Gln-310; that span reads TGG.

The protein belongs to the glycosyltransferase 28 family. MurG subfamily.

The protein resides in the cell inner membrane. The enzyme catalyses di-trans,octa-cis-undecaprenyl diphospho-N-acetyl-alpha-D-muramoyl-L-alanyl-D-glutamyl-meso-2,6-diaminopimeloyl-D-alanyl-D-alanine + UDP-N-acetyl-alpha-D-glucosamine = di-trans,octa-cis-undecaprenyl diphospho-[N-acetyl-alpha-D-glucosaminyl-(1-&gt;4)]-N-acetyl-alpha-D-muramoyl-L-alanyl-D-glutamyl-meso-2,6-diaminopimeloyl-D-alanyl-D-alanine + UDP + H(+). The protein operates within cell wall biogenesis; peptidoglycan biosynthesis. Functionally, cell wall formation. Catalyzes the transfer of a GlcNAc subunit on undecaprenyl-pyrophosphoryl-MurNAc-pentapeptide (lipid intermediate I) to form undecaprenyl-pyrophosphoryl-MurNAc-(pentapeptide)GlcNAc (lipid intermediate II). This Rickettsia rickettsii (strain Iowa) protein is UDP-N-acetylglucosamine--N-acetylmuramyl-(pentapeptide) pyrophosphoryl-undecaprenol N-acetylglucosamine transferase.